The primary structure comprises 466 residues: Polycomb group protein FIE1 (466 aa).

Basic residues predominate over residues 1 to 10 (MGPTSRNHKS). Positions 1–71 (MGPTSRNHKS…GEGEPQETVL (71 aa)) are disordered. The segment covering 31-49 (SITASASASAFASPAVANS) has biased composition (low complexity). 6 WD repeats span residues 167 to 209 (DMNE…IYKS), 212 to 252 (GHGG…LILV), 258 to 298 (GHRH…EYVE), 324 to 361 (IHSN…ENPG), 374 to 414 (PECN…PVLI), and 421 to 460 (QVKS…TAPV).

The protein belongs to the WD repeat ESC family. Interacts with EZ1 and CLF. Component of the polycomb repressive complex 2 (PRC2), which methylates 'Lys-27' residues of histone H3 (H3K27me3), leading to transcriptional repression of the affected target gene. Expressed specifically in seed endosperm.

Its function is as follows. Polycomb group (PcG) protein. PcG proteins act by forming multiprotein complexes, which are required to maintain the transcriptionally repressive state of homeotic genes throughout development. PcG proteins are not required to initiate repression, but to maintain it during later stages of development. They act via the methylation of histones, rendering chromatin heritably changed in its expressibility. Together with EZ1 and CLF forms a complex that is involved in gene transcriptional repression by trimethylation on histone H3 'Lys-27' (H3K27me3) of target genes. Involved in the regulation of embryo and seed endosperm development. FIE1-containing PcG complex in seed endosperm regulates the expression of various transcription factors by trimethylation on histone H3 'Lys-27' (H3K27me3) of target genes. Involved in the overall expression regulation of nutrient metabolism genes, such as prolamin synthesis and seed storage protein synthesis genes. Can regulate valine, leucine and isoleucine metabolism-related genes. This chain is Polycomb group protein FIE1, found in Oryza sativa subsp. japonica (Rice).